A 499-amino-acid chain; its full sequence is Lysine--tRNA ligase (499 aa).

Positions 408 and 415 each coordinate Mg(2+).

It belongs to the class-II aminoacyl-tRNA synthetase family. In terms of assembly, homodimer. Requires Mg(2+) as cofactor.

It localises to the cytoplasm. The enzyme catalyses tRNA(Lys) + L-lysine + ATP = L-lysyl-tRNA(Lys) + AMP + diphosphate. The polypeptide is Lysine--tRNA ligase (Agrobacterium fabrum (strain C58 / ATCC 33970) (Agrobacterium tumefaciens (strain C58))).